Consider the following 310-residue polypeptide: Ribosomal RNA small subunit methyltransferase H (310 aa).

S-adenosyl-L-methionine contacts are provided by residues 33–35 (AGH), D53, F79, D100, and Q107.

Belongs to the methyltransferase superfamily. RsmH family.

It localises to the cytoplasm. It carries out the reaction cytidine(1402) in 16S rRNA + S-adenosyl-L-methionine = N(4)-methylcytidine(1402) in 16S rRNA + S-adenosyl-L-homocysteine + H(+). Its function is as follows. Specifically methylates the N4 position of cytidine in position 1402 (C1402) of 16S rRNA. The protein is Ribosomal RNA small subunit methyltransferase H of Clostridium botulinum (strain Eklund 17B / Type B).